Here is a 728-residue protein sequence, read N- to C-terminus: Cytosolic endo-beta-N-acetylglucosaminidase (728 aa).

The 95-residue stretch at 287-381 folds into the BRCT domain; sequence QNRVFFDACD…NFLLNEDKFW (95 aa).

This sequence belongs to the glycosyl hydrolase 85 family.

The protein localises to the cytoplasm. It localises to the cytosol. The catalysed reaction is an N(4)-(oligosaccharide-(1-&gt;3)-[oligosaccharide-(1-&gt;6)]-beta-D-Man-(1-&gt;4)-beta-D-GlcNAc-(1-&gt;4)-alpha-D-GlcNAc)-L-asparaginyl-[protein] + H2O = an oligosaccharide-(1-&gt;3)-[oligosaccharide-(1-&gt;6)]-beta-D-Man-(1-&gt;4)-D-GlcNAc + N(4)-(N-acetyl-beta-D-glucosaminyl)-L-asparaginyl-[protein]. Its function is as follows. Endoglycosidase that releases N-glycans from glycoproteins by cleaving the beta-1,4-glycosidic bond in the N,N'-diacetylchitobiose core. Involved in the processing of free oligosaccharides in the cytosol. This chain is Cytosolic endo-beta-N-acetylglucosaminidase (ENGASE), found in Gallus gallus (Chicken).